The sequence spans 347 residues: F-box/LRR-repeat/kelch-repeat protein At2g27520 (347 aa).

The F-box domain occupies 1–50; the sequence is MVRLDLPWDLVDEILSRLPATSLGRLRFTCKRWNALFKDPEFITKQFHKA. LRR repeat units follow at residues 59 to 82, 152 to 177, 196 to 220, and 261 to 285; these read LSNFGVYSMSTNLKEIPNNIEIAQ, CKLVEIFELKSNSWRVLSKVHPNVEK, KFNILSFDFTTETFRSVPLPFLYQD, and LSWSKSFTLEFDSLRDLPVMSILRI. The stretch at 138–187 is one Kelch 1 repeat; the sequence is KSYDSYKILRITYGCKLVEIFELKSNSWRVLSKVHPNVEKHYYGGVSFKG. Residues 306 to 347 form a Kelch 2 repeat; the sequence is MIYIVGKNGFKKLSYEKDRSNLWRLPFFFSYVPSLVGLYPPM.

This chain is F-box/LRR-repeat/kelch-repeat protein At2g27520, found in Arabidopsis thaliana (Mouse-ear cress).